Consider the following 421-residue polypeptide: ASMFKHDHYMDNGVRYPNGDGICEQLNETKCDAGFSYDRSICEGPHYWHTISKWFIACGIGQRQSPINIVSYDAKFRQRLPKLKFKPHMEKLKTEVTNHQNRAPEFEPEDGENLYVKLNNLVDGHYKFHNLHVHNGRTRRKGSEHSVNGRFTPMEAHLVFHHDDQTHFEPTRTKLGGAFPGHNDFVVVGVFHEVGDDGFGDEPDDEECKRILKGHHPDNNENGNGDNGNNGYNGDNGNNGDNGNNGYNGDNGNNGDNGNNGYNGDNGNNGDNGNNGENGNNGENGNNGDNGNNGENGHKHGCRVKKAKHLSRILECAYRNDKVREFKKVGEEEGLDVHLTPEMALPPLKYRHYYTYEGSLTTPPCTESVLWVVQKCHVQVSRRVLHALRNVEGYKDGTTLRKYGTRRPTQKNKVTVYKSFK.

An N-linked (GlcNAc...) asparagine glycan is attached at Asn-27. One can recognise an Alpha-carbonic anhydrase domain in the interval 33–420 (AGFSYDRSIC…KNKVTVYKSF (388 aa)). 3 residues coordinate Zn(2+): His-132, His-134, and His-157. Over residues 197 to 206 (DGFGDEPDDE) the composition is skewed to acidic residues. Residues 197-303 (DGFGDEPDDE…GENGHKHGCR (107 aa)) form a disordered region. Positions 207–219 (ECKRILKGHHPDN) are enriched in basic and acidic residues. The segment covering 220 to 295 (NENGNGDNGN…NNGDNGNNGE (76 aa)) has biased composition (low complexity). Repeat copies occupy residues 225 to 227 (GDN), 228 to 230 (GNN), 231 to 233 (GYN), 234 to 236 (GDN), 237 to 239 (GNN), 240 to 242 (GDN), 243 to 245 (GNN), 246 to 248 (GYN), 249 to 251 (GDN), 252 to 254 (GNN), 255 to 257 (GDN), 258 to 260 (GNN), 261 to 263 (GYN), 264 to 266 (GDN), 267 to 269 (GNN), 270 to 272 (GDN), 273 to 275 (GNN), 276 to 278 (GEN), 279 to 281 (GNN), 282 to 284 (GEN), 285 to 287 (GNN), 288 to 290 (GDN), 291 to 292 (GN), and 294 to 296 (GEN). The 24 X 3 AA approximate tandem repeats of G-X-N stretch occupies residues 225 to 296 (GDNGNNGYNG…NGDNGNNGEN (72 aa)). 361–362 (TT) contributes to the substrate binding site.

Belongs to the alpha-carbonic anhydrase family. As to quaternary structure, homooligomer; disulfide-linked. May also be disulfide-linked to insoluble organic matrix. The cofactor is Zn(2+). In terms of tissue distribution, expressed in the mantle.

The protein localises to the secreted. It localises to the extracellular space. The protein resides in the extracellular matrix. It carries out the reaction hydrogencarbonate + H(+) = CO2 + H2O. In terms of biological role, acts as a negative regulator for calcification in the shells of mollusks. May function both as a calcium concentrator and as a carbonic anhydrase required for production of carbonate ions, which are assembled to CaCO(3) at mineralization sites. Is important for shell formation in both the calcitic prismatic layer and the aragonitic nacreous layerr. Shows inhibitory activity of crystal formation when present in free state but, when attached to the insoluble matrix, may regulate the form and size of aragonite crystal. This Pinctada maxima (Silver-lipped pearl oyster) protein is Nacrein-like protein M.